A 302-amino-acid chain; its full sequence is Protein TILLER ANGLE CONTROL 1 (302 aa).

The IGT motif motif lies at 57–63 (GILTIGT). Disordered regions lie at residues 82 to 115 (ESEE…VEDE) and 159 to 180 (EGSS…KNKK). The segment covering 99-115 (DDDDDDDEHYDHSVEDE) has biased composition (acidic residues). Over residues 162–175 (SEISTKPDQSANDQ) the composition is skewed to polar residues.

The protein belongs to the TAC family. As to expression, highly expressed in flower buds. Expressed in branch attachment sites, vegetative buds and young fruits.

In terms of biological role, involved in the regulation of axillary shoot growth angle. Promotes horizontal shoot growth. In Prunus persica (Peach), this protein is Protein TILLER ANGLE CONTROL 1.